Here is a 192-residue protein sequence, read N- to C-terminus: Adenylate kinase (192 aa).

An ATP-binding site is contributed by 10 to 15 (GAGKGT). The tract at residues 30–59 (STGDMLREAIEKETEIGKQAKIFIESGALV) is NMP. AMP is bound by residues T31, R36, 57–59 (ALV), 85–88 (GYPR), and Q92. The interval 126–142 (KRVEEVVAVGGKIRSDD) is LID. Residue R127 participates in ATP binding. Residues R139 and R150 each contribute to the AMP site. Position 178 (A178) interacts with ATP.

Belongs to the adenylate kinase family. As to quaternary structure, monomer.

The protein localises to the cytoplasm. The enzyme catalyses AMP + ATP = 2 ADP. It participates in purine metabolism; AMP biosynthesis via salvage pathway; AMP from ADP: step 1/1. Catalyzes the reversible transfer of the terminal phosphate group between ATP and AMP. Plays an important role in cellular energy homeostasis and in adenine nucleotide metabolism. The polypeptide is Adenylate kinase (Bartonella bacilliformis (strain ATCC 35685 / KC583 / Herrer 020/F12,63)).